Reading from the N-terminus, the 1414-residue chain is MKALLDLFKQVQQNEQFDAIKIGLASPEKIRSWSYGEVKKPETINYRTFKPERDGLFCAKIFGPIKDYECLCGKYKRLKHRGVICEKCGVEVTLAKVRRERMGHIELASPTAHIWFLKSLPSRLGMVLDMTLRDIERVLYFEAYVVTDPGMTPLKRCQIMSEDDYAAKYEEFGDDFTAFMGAEGIRELLRAIDIDRDAEMLRQELKDSKSEAKIKKYAKRLKVLEAFQRSGIKPDWMIMEVLPVLPPELRPLVPLDGGRFATSDLNDLYRRVINRNNRLKRLMELRAPEIITRNEKRMLQEAVDSLLDNGRRGKAMTGANKRPLKSLAEMIKGKGGRFRQNLLGKRVDYSGRSVIVVGPQLKLHQCGLPKLMALELFKPFIFNKLELMGLATTIKAAKKLVEIQEPVVWDILEDVIREHPVMLNRAPTLHRLGIQAFEPVLIEGKAIQLHPLVCAAFNADFDGDQMAVHVPLSIEAQMEARTLMLASNNILFPSNGEPSIVPSQDIVLGLYYATREAINAKGEGMMFPDVSEVIRAYDNKEVELATRITVRITEYPKNVETGEFEKTVTRYETTVGRAILSEILPKGLPFSVLNRALKKKEISRLINLSFRKCGLRATVVFADQLLQSGFRLATRAGISICVDDMLVPSQKVDIIATAEGEVKQIEQQYSSGLVTAGERYNKVVDIWGKAGDDVGKAMMDQLKVEDVTKRDGTKTTQESFNAIYMMADSGARGSAAQIRQLAGMRGLMAKPDGSIIETPITANFREGLNVLQYFISTHGARKGLADTALKTANSGYLTRRLVDVTQDLVVIEDDCGTSNGASMKALVEGGEVIEALRDRILGRVAANDIVNPETQATLYAAGTLLDEDMVEEIERLGIDEVKVRTPLTCDTRFGLCALCYGRDLGRGSMVNAGEAVGVIAAQSIGEPGTQLTMRTFHIGGAASRAAVASSVEAKSNGTVRFTATMRYVTNGKGGQIVISRSGEVLITDDLGRERERHKVPYGATLIVKDGLVIKAGTALATWDPLTRPIITEYTGTVKFENVEEGSTVARQIDEVTGLSTLVVIDAKRRGSVTKTVRPQVKLLNEQGEEVKIAGTEHAVTIGFQVGALITVKDGQQVTVGEVLARIPTESQKTRDITGGLPRVAELFEARSPKDAGMLAEVTGTVAFGKETKGKQRLEITDMDGNKHEFLITKDKQVLVHDGQVVNKGEMIVDGPADPQDILRLLGIEALARYIVDEVQDVYRLQGVKINDKHIEVIVRQMLRRVQVVDAGDANYIVGEQVERSELLDENDRVIAQGKIPATYENVLLGITKASLSTDSFISAASFQETTRVLTEAAIMGKRDGLRGLKENVIVGRLIPAGTGLAFHRARKEKESWEAEERTALLQSEKAARAAEAEAQFADISSTPDSDTDAS.

Zn(2+)-binding residues include cysteine 70, cysteine 72, cysteine 85, and cysteine 88. The Mg(2+) site is built by aspartate 460, aspartate 462, and aspartate 464. 4 residues coordinate Zn(2+): cysteine 815, cysteine 889, cysteine 896, and cysteine 899. A disordered region spans residues 1395–1414 (EAEAQFADISSTPDSDTDAS).

The protein belongs to the RNA polymerase beta' chain family. As to quaternary structure, the RNAP catalytic core consists of 2 alpha, 1 beta, 1 beta' and 1 omega subunit. When a sigma factor is associated with the core the holoenzyme is formed, which can initiate transcription. It depends on Mg(2+) as a cofactor. Zn(2+) serves as cofactor.

The enzyme catalyses RNA(n) + a ribonucleoside 5'-triphosphate = RNA(n+1) + diphosphate. Its function is as follows. DNA-dependent RNA polymerase catalyzes the transcription of DNA into RNA using the four ribonucleoside triphosphates as substrates. The sequence is that of DNA-directed RNA polymerase subunit beta' from Herminiimonas arsenicoxydans.